The chain runs to 156 residues: ATP synthase subunit b (156 aa).

The chain crosses the membrane as a helical span at residues 7-27 (LIGQAIWFALFVFFCMKFVWP).

Belongs to the ATPase B chain family. As to quaternary structure, F-type ATPases have 2 components, F(1) - the catalytic core - and F(0) - the membrane proton channel. F(1) has five subunits: alpha(3), beta(3), gamma(1), delta(1), epsilon(1). F(0) has three main subunits: a(1), b(2) and c(10-14). The alpha and beta chains form an alternating ring which encloses part of the gamma chain. F(1) is attached to F(0) by a central stalk formed by the gamma and epsilon chains, while a peripheral stalk is formed by the delta and b chains.

It localises to the cell inner membrane. F(1)F(0) ATP synthase produces ATP from ADP in the presence of a proton or sodium gradient. F-type ATPases consist of two structural domains, F(1) containing the extramembraneous catalytic core and F(0) containing the membrane proton channel, linked together by a central stalk and a peripheral stalk. During catalysis, ATP synthesis in the catalytic domain of F(1) is coupled via a rotary mechanism of the central stalk subunits to proton translocation. In terms of biological role, component of the F(0) channel, it forms part of the peripheral stalk, linking F(1) to F(0). This Alcanivorax borkumensis (strain ATCC 700651 / DSM 11573 / NCIMB 13689 / SK2) protein is ATP synthase subunit b.